Reading from the N-terminus, the 107-residue chain is Transmembrane protein 213 (107 aa).

The N-terminal stretch at 1–27 (MQRLPAATRATLILSLAFASLHSACSA) is a signal peptide. Over 28–70 (EASSSNSSSLTAHHPDPGTLEQCLNVDFCPQAARCCRTGVDEY) the chain is Extracellular. The chain crosses the membrane as a helical span at residues 71–91 (GWIAAAVGWSLWFLTLILLCV). Over 92 to 107 (DKLMKLTPDEPKDLQA) the chain is Cytoplasmic.

The protein resides in the membrane. The chain is Transmembrane protein 213 (TMEM213) from Homo sapiens (Human).